The chain runs to 1040 residues: Activated CDC42 kinase 1 (1040 aa).

Residues 1 to 110 (MQPEEGTGWL…PSPTPGGLAG (110 aa)) are SAM-like domain. Positions 86–109 (EAEFPSHHSQSTFRKPSPTPGGLA) are disordered. Threonine 113 bears the Phosphothreonine mark. The region spanning 126-385 (LRLLEKLGDG…PTFVALRDFL (260 aa)) is the Protein kinase domain. ATP contacts are provided by residues 132–140 (LGDGSFGVV) and lysine 158. The active-site Proton acceptor is the aspartate 252. Tyrosine 284 is subject to Phosphotyrosine; by SRC and autocatalysis. The region spanning 388-448 (AQPTDMRALQ…PRNVVTSVAG (61 aa)) is the SH3 domain. Residues 505-527 (RPTQHLGRMKKPTYDPVSEDPDP) are disordered. The residue at position 518 (tyrosine 518) is a Phosphotyrosine. Residues 623–652 (DWDARPLPPPPAYDDVAQDEDDFEVCSINS) form a required for interaction with SRC region. The segment at 632–635 (PPAY) is required for interaction with NEDD4. The interval 722-824 (TGQLTPSPTP…MPTTQSFASD (103 aa)) is disordered. The interval 733-876 (GDDKPQVPPR…PYLERYQRFL (144 aa)) is EBD domain. 2 stretches are compositionally biased toward pro residues: residues 738-749 (QVPPRVPIPPRP) and 772-783 (PSSPPRVPPREP). Residues 802–812 (PLPHRLSSSPG) are compositionally biased toward low complexity. Tyrosine 827 bears the Phosphotyrosine mark. Residue arginine 839 is modified to Omega-N-methylarginine. 2 positions are modified to phosphotyrosine: tyrosine 859 and tyrosine 872. The residue at position 881 (serine 881) is a Phosphoserine. The segment at 881–957 (SPEEPAALPV…CPGDGQEAAR (77 aa)) is disordered. Residues 888-903 (LPVPPLLPPPSTPAPA) are compositionally biased toward pro residues. Residues 922 to 931 (NFSTNNSNPG) show a composition bias toward polar residues. In terms of domain architecture, UBA spans 958-998 (PADKVQMLQAMVHGVTTEECQAALRSHSWSIQRAAQYLKVE).

The protein belongs to the protein kinase superfamily. Tyr protein kinase family. As to quaternary structure, homodimer. Interacts with CDC42. Interacts with CSPG4 (activated). Interacts with MERTK (activated); stimulates autophosphorylation. May interact (phosphorylated) with HSP90AB1; maintains kinase activity. Interacts with NPHP1. Interacts with SNX9 (via SH3 domain). Interacts with SRC (via SH2 and SH3 domain). Interacts with EGFR, and this interaction is dependent on EGF stimulation and kinase activity of EGFR. Interacts (via kinase domain) with AKT1. Part of a collagen stimulated complex involved in cell migration composed of CDC42, CRK, TNK2 and BCAR1/p130cas. Interacts with BCAR1/p130cas via SH3 domains. Forms complexes with GRB2 and numerous receptor tyrosine kinases (RTK) including LTK, AXL or PDGFRL, in which GRB2 promotes RTK recruitment by TNK2. Interacts with NEDD4 (via WW3 domain). NEDD4L and EGF promote association with NEDD4. Mg(2+) is required as a cofactor. Post-translationally, autophosphorylation regulates kinase activity. Phosphorylation on Tyr-518 is required for interaction with SRC and is observed during association with clathrin-coated pits. Polyubiquitinated by NEDD4 and NEDD4L. Degradation can be induced by EGF and is lysosome-dependent.

It localises to the cell membrane. The protein localises to the nucleus. The protein resides in the endosome. It is found in the cell junction. Its subcellular location is the adherens junction. It localises to the cytoplasmic vesicle membrane. The protein localises to the cytoplasmic vesicle. The protein resides in the clathrin-coated vesicle. It is found in the membrane. Its subcellular location is the clathrin-coated pit. It localises to the cytoplasm. The protein localises to the cytosol. It catalyses the reaction L-tyrosyl-[protein] + ATP = O-phospho-L-tyrosyl-[protein] + ADP + H(+). The enzyme catalyses L-seryl-[protein] + ATP = O-phospho-L-seryl-[protein] + ADP + H(+). It carries out the reaction L-threonyl-[protein] + ATP = O-phospho-L-threonyl-[protein] + ADP + H(+). In terms of biological role, non-receptor tyrosine-protein and serine/threonine-protein kinase that is implicated in cell spreading and migration, cell survival, cell growth and proliferation. Transduces extracellular signals to cytosolic and nuclear effectors. Phosphorylates AKT1, AR, MCF2, WASL and WWOX. Implicated in trafficking and clathrin-mediated endocytosis through binding to epidermal growth factor receptor (EGFR) and clathrin. Binds to both poly- and mono-ubiquitin and regulates ligand-induced degradation of EGFR, thereby contributing to the accumulation of EGFR at the limiting membrane of early endosomes. Downstream effector of CDC42 which mediates CDC42-dependent cell migration via phosphorylation of BCAR1. May be involved both in adult synaptic function and plasticity and in brain development. Activates AKT1 by phosphorylating it on 'Tyr-176'. Phosphorylates AR on 'Tyr-267' and 'Tyr-363', thereby promoting its recruitment to androgen-responsive enhancers (AREs). Phosphorylates WWOX on 'Tyr-287'. Phosphorylates MCF2, thereby enhancing its activity as a guanine nucleotide exchange factor (GEF) toward Rho family proteins. Contributes to the control of AXL receptor levels. Confers metastatic properties on cancer cells and promotes tumor growth by negatively regulating tumor suppressor such as WWOX and positively regulating pro-survival factors such as AKT1 and AR. This Rattus norvegicus (Rat) protein is Activated CDC42 kinase 1.